Reading from the N-terminus, the 967-residue chain is Probable serine/threonine-protein kinase DDB_G0290621 (967 aa).

Disordered regions lie at residues 65 to 122, 215 to 251, and 287 to 326; these read EDSD…KEKE, SSLS…SSSS, and QQQL…SPRT. Positions 66–94 are enriched in acidic residues; it reads DSDEDDDDEEDEEDEEDSDEEEDDDVVED. The span at 95-122 shows a compositional bias: basic and acidic residues; it reads DNTKDIGKSRDSDKSIKGKEKGKEKEKE. The span at 297–326 shows a compositional bias: low complexity; it reads QQQQQQQQQQQQQNNSMLQQSNNNNISPRT. One can recognise a Protein kinase domain in the interval 345–610; sequence FNDSNKIGEG…EIRSRLSEII (266 aa). ATP-binding positions include 351-359 and lysine 368; that span reads IGEGGQCSI. Residue aspartate 467 is the Proton acceptor of the active site. Disordered stretches follow at residues 634–667, 700–752, and 862–882; these read DDSL…NNNN, STSN…NNNI, and TSSS…NPSN. Over residues 639–666 the composition is skewed to low complexity; sequence NNNNNNNQNNNNQNNNNNNNNNNNNNNN. The segment covering 863–882 has biased composition (low complexity); that stretch reads SSSSNKNNNNNNNDNNNPSN.

This sequence belongs to the protein kinase superfamily. TKL Ser/Thr protein kinase family.

The enzyme catalyses L-seryl-[protein] + ATP = O-phospho-L-seryl-[protein] + ADP + H(+). The catalysed reaction is L-threonyl-[protein] + ATP = O-phospho-L-threonyl-[protein] + ADP + H(+). The chain is Probable serine/threonine-protein kinase DDB_G0290621 from Dictyostelium discoideum (Social amoeba).